A 239-amino-acid polypeptide reads, in one-letter code: Fatty acid metabolism regulator protein (239 aa).

The HTH gntR-type domain maps to 6 to 74; that stretch reads KGPASFAEKY…HGKPTRVNNF (69 aa). The segment at residues 34–53 is a DNA-binding region (H-T-H motif); the sequence is ERELSELIGVTRTTLREVLQ.

As to quaternary structure, homodimer.

The protein localises to the cytoplasm. Functionally, multifunctional regulator of fatty acid metabolism. This chain is Fatty acid metabolism regulator protein, found in Shewanella halifaxensis (strain HAW-EB4).